Reading from the N-terminus, the 119-residue chain is uncharacterized protein (119 aa).

This is an uncharacterized protein from Methanocaldococcus jannaschii (strain ATCC 43067 / DSM 2661 / JAL-1 / JCM 10045 / NBRC 100440) (Methanococcus jannaschii).